The primary structure comprises 745 residues: DNA ligase (745 aa).

The disordered stretch occupies residues 1–27 (MRNHGPGSERKDACVSAPDPTFSDDVP). NAD(+) contacts are provided by residues 57-61 (DAEYD), 106-107 (SL), and Glu135. Lys137 serves as the catalytic N6-AMP-lysine intermediate. Arg158 and Glu197 together coordinate NAD(+). The segment at 216-235 (GKPPFANPRNAAAGSLRQKD) is disordered. Residues Lys313 and Lys337 each contribute to the NAD(+) site. Residues Cys431, Cys434, Cys450, and Cys456 each coordinate Zn(2+). The BRCT domain maps to 649–738 (DGPRLLDGIT…PEAARAARLS (90 aa)).

The protein belongs to the NAD-dependent DNA ligase family. LigA subfamily. Requires Mg(2+) as cofactor. It depends on Mn(2+) as a cofactor.

The enzyme catalyses NAD(+) + (deoxyribonucleotide)n-3'-hydroxyl + 5'-phospho-(deoxyribonucleotide)m = (deoxyribonucleotide)n+m + AMP + beta-nicotinamide D-nucleotide.. Its function is as follows. DNA ligase that catalyzes the formation of phosphodiester linkages between 5'-phosphoryl and 3'-hydroxyl groups in double-stranded DNA using NAD as a coenzyme and as the energy source for the reaction. It is essential for DNA replication and repair of damaged DNA. The chain is DNA ligase from Thermobifida fusca (strain YX).